A 267-amino-acid polypeptide reads, in one-letter code: Endonuclease NucS (267 aa).

Belongs to the NucS endonuclease family.

It localises to the cytoplasm. Its function is as follows. Cleaves both 3' and 5' ssDNA extremities of branched DNA structures. The sequence is that of Endonuclease NucS from Pyrococcus furiosus (strain ATCC 43587 / DSM 3638 / JCM 8422 / Vc1).